We begin with the raw amino-acid sequence, 426 residues long: Potassium channel subfamily K member 2 (426 aa).

The Cytoplasmic portion of the chain corresponds to M1–T61. Important for GNG4 binding and L-glutamate release in astrocytes stretches follow at residues A17–S38 and D51–T61. Residues V62–A82 traverse the membrane as a helical segment. N110 and N134 each carry an N-linked (GlcNAc...) asparagine glycan. The pore-forming intramembrane region spans L144–G170. K(+)-binding residues include T157, I158, G159, and F160. The tract at residues T157–N162 is selectivity filter 1. A helical transmembrane segment spans residues I172–V192. The Cytoplasmic portion of the chain corresponds to G193–R222. The chain crosses the membrane as a helical span at residues I223 to V243. Residues A253–D283 constitute an intramembrane region (pore-forming). The K(+) site is built by T266, I267, G268, and F269. Residues T266–D271 are selectivity filter 2. Residues V288–G308 form a helical membrane-spanning segment. Residues D309–K426 lie on the Cytoplasmic side of the membrane. Positions V313–R326 are interaction with AKAP5. The segment at T337 to S385 is essential for chloroform and halothane sensitivity. S348 carries the phosphoserine; by PKA modification.

It belongs to the two pore domain potassium channel (TC 1.A.1.8) family. In terms of assembly, homodimer; disulfide-linked. Forms heterodimers with other 2-pore domain K(+) channel subunits, such as KCNK1, KCNK4, KCNK10 and KCNK18. Interacts with AKAP5; the channel is recruited to postsynaptic microdomains by AKAP5 where it can integrate neurotransmitter receptor signals. Part of a complex composed of AKAP5 and ADRB2. Upon AKAP5 binding, the channel is no longer sensitive to intracellular acidification, membrane stretch or arachidonic acid stimuli. Interacts with POPDC1; the interaction enhances KCNK2 surface expression and is inhibited by cAMP. Interacts (via N-terminus) with G-protein subunit GNG4 (via C-terminus); this interaction confers ion selectivity to L-glutamate and Cl(-) anions. Post-translationally, phosphorylation at Ser-348 controls the reversible conversion from a leak channel to a voltage-dependent channel. As to expression, expressed in cardiomyocytes (at protein level). Expressed in various brain regions including the lateral olfactory tract, piriform cortex of the forebrain, paraventricular and anteromedial thalamic nuclei, brainstem, caudate putamen, nucleus accumbens, neocortex and interpeduncular nucleus. Detected in astrocytes in hippocampus stratum radiatum. Expressed in brain and kidney.

The protein localises to the cell membrane. Its subcellular location is the endoplasmic reticulum membrane. It localises to the cell projection. The protein resides in the axon. It is found in the dendrite. The protein localises to the postsynaptic density membrane. Its subcellular location is the sarcolemma. The catalysed reaction is K(+)(in) = K(+)(out). It catalyses the reaction L-glutamate(out) = L-glutamate(in). It carries out the reaction chloride(in) = chloride(out). The enzyme catalyses Rb(+)(in) = Rb(+)(out). The catalysed reaction is Cs(+)(in) = Cs(+)(out). Activated by various stimuli including intracellular acidic pH, mechanical stretch and polyunsaturated fatty acids such as arachidonic acid. K(+) channel that conducts voltage-dependent outward rectifying currents upon membrane depolarization. Voltage sensing is coupled to K(+) electrochemical gradient in an 'ion flux gating' mode where outward but not inward ion flow opens the gate. Converts to voltage-independent 'leak' conductance mode upon stimulation by various stimuli including mechanical membrane stretch, acidic pH, heat and lipids. Reversibly converts between a voltage-insensitive K(+) 'leak' channel and a voltage-dependent outward rectifying K(+) channel in a phosphorylation-dependent manner. Homo- and heterodimerizes to form functional channels with distinct regulatory and gating properties. In trigeminal ganglia sensory neurons, the heterodimer of KCNK2/TREK-1 and KCNK18/TRESK inhibits neuronal firing and neurogenic inflammation by stabilizing the resting membrane potential at K(+) equilibrium potential as well as by regulating the threshold of action potentials and the spike frequency. At trigeminal A-beta afferent nerves, the heterodimer of KCNK2/TREK-1 and KCNK4/TRAAK is mostly coexpressed at nodes of Ranvier where it conducts voltage-independent mechanosensitive and thermosensitive currents, allowing rapid action potential repolarization, high speed and high frequence saltatory conduction on myelinated nerves to ensure prompt sensory responses. In hippocampal astrocytes, the heterodimer of KCNK2/TREK-1 and KCNK1/TWIK-1 allows passive K(+) conductance under basal conditions, but changes ion selectivity and becomes permeable to L-glutamate and Cl(-) ions upon binding to G-protein subunit GNG4 in stimulated astrocytes. Mediates rapid L-glutamate release in response to activation of G-protein-coupled receptors such as F2R and CNR1. In hippocampal pyramidal neurons, the homodimer of KCNK2/TREK-1 contributes to gamma-aminobutyric acid (GABA) B-induced slow inhibitory postsynaptic potential. Associates with AKAP5 and Gs-protein-coupled receptor B2AR at postsynaptic dense bodies and converts to a leak channel no longer sensitive to stimulation by arachidonic acid, acidic pH or mechanical stress, nor inhibited by Gq-coupled receptors but still under the negative control of Gs-coupled receptors. Permeable to other monovalent cations such as Rb(+) and Cs(+). In terms of biological role, does not display channel activity but reduces the channel activity of isoform 1, isoform 2 and isoform 4 and reduces cell surface expression of isoform 2. This Rattus norvegicus (Rat) protein is Potassium channel subfamily K member 2.